The following is a 260-amino-acid chain: Ribosomal RNA small subunit methyltransferase A (260 aa).

The S-adenosyl-L-methionine site is built by Asn16, Leu18, Gly43, Glu64, Asp86, and Asn108.

The protein belongs to the class I-like SAM-binding methyltransferase superfamily. rRNA adenine N(6)-methyltransferase family. RsmA subfamily.

It localises to the cytoplasm. It catalyses the reaction adenosine(1518)/adenosine(1519) in 16S rRNA + 4 S-adenosyl-L-methionine = N(6)-dimethyladenosine(1518)/N(6)-dimethyladenosine(1519) in 16S rRNA + 4 S-adenosyl-L-homocysteine + 4 H(+). Specifically dimethylates two adjacent adenosines (A1518 and A1519) in the loop of a conserved hairpin near the 3'-end of 16S rRNA in the 30S particle. May play a critical role in biogenesis of 30S subunits. In Buchnera aphidicola subsp. Baizongia pistaciae (strain Bp), this protein is Ribosomal RNA small subunit methyltransferase A.